Consider the following 119-residue polypeptide: Aspartate 1-decarboxylase (119 aa).

Residue S25 is the Schiff-base intermediate with substrate; via pyruvic acid of the active site. S25 is subject to Pyruvic acid (Ser). T57 contacts substrate. The active-site Proton donor is Y58. 73–75 contributes to the substrate binding site; sequence GAA.

It belongs to the PanD family. In terms of assembly, heterooctamer of four alpha and four beta subunits. The cofactor is pyruvate. Is synthesized initially as an inactive proenzyme, which is activated by self-cleavage at a specific serine bond to produce a beta-subunit with a hydroxyl group at its C-terminus and an alpha-subunit with a pyruvoyl group at its N-terminus.

It is found in the cytoplasm. The catalysed reaction is L-aspartate + H(+) = beta-alanine + CO2. Its pathway is cofactor biosynthesis; (R)-pantothenate biosynthesis; beta-alanine from L-aspartate: step 1/1. In terms of biological role, catalyzes the pyruvoyl-dependent decarboxylation of aspartate to produce beta-alanine. The polypeptide is Aspartate 1-decarboxylase (Desulfotalea psychrophila (strain LSv54 / DSM 12343)).